The primary structure comprises 244 residues: Orotidine 5'-phosphate decarboxylase (244 aa).

Substrate is bound by residues D10, K32, 59-68, T122, R184, Q193, G213, and R214; that span reads DLKLHDIPNT. K61 (proton donor) is an active-site residue.

It belongs to the OMP decarboxylase family. Type 1 subfamily. Homodimer.

It catalyses the reaction orotidine 5'-phosphate + H(+) = UMP + CO2. It participates in pyrimidine metabolism; UMP biosynthesis via de novo pathway; UMP from orotate: step 2/2. Its function is as follows. Catalyzes the decarboxylation of orotidine 5'-monophosphate (OMP) to uridine 5'-monophosphate (UMP). In Geobacillus kaustophilus (strain HTA426), this protein is Orotidine 5'-phosphate decarboxylase.